The following is a 145-amino-acid chain: Superoxide dismutase [Mn/Fe] (145 aa).

Fe(3+) is bound by residues H10 and H64. Mn(2+) is bound by residues H10 and H64.

Belongs to the iron/manganese superoxide dismutase family. Mn(2+) is required as a cofactor. It depends on Fe(3+) as a cofactor.

It catalyses the reaction 2 superoxide + 2 H(+) = H2O2 + O2. In terms of biological role, destroys superoxide anion radicals which are normally produced within the cells and which are toxic to biological systems. Catalyzes the dismutation of superoxide anion radicals into O2 and H2O2 by successive reduction and oxidation of the transition metal ion at the active site. In Streptococcus iniae (Streptococcus shiloi), this protein is Superoxide dismutase [Mn/Fe] (sodA).